Consider the following 314-residue polypeptide: Porphobilinogen deaminase (314 aa).

At C242 the chain carries S-(dipyrrolylmethanemethyl)cysteine.

This sequence belongs to the HMBS family. As to quaternary structure, monomer. The cofactor is dipyrromethane.

The enzyme catalyses 4 porphobilinogen + H2O = hydroxymethylbilane + 4 NH4(+). It functions in the pathway porphyrin-containing compound metabolism; protoporphyrin-IX biosynthesis; coproporphyrinogen-III from 5-aminolevulinate: step 2/4. Its function is as follows. Tetrapolymerization of the monopyrrole PBG into the hydroxymethylbilane pre-uroporphyrinogen in several discrete steps. In Buchnera aphidicola subsp. Acyrthosiphon pisum (strain APS) (Acyrthosiphon pisum symbiotic bacterium), this protein is Porphobilinogen deaminase (hemC).